The sequence spans 375 residues: Chaperone protein DnaJ 1 (375 aa).

Positions 4–68 (DYYAILGVER…EKRRIVDMGG (65 aa)) constitute a J domain. The CR-type zinc finger occupies 127 to 209 (GTKKPITIDT…CGGDGRVRTQ (83 aa)). Positions 140, 143, 157, 160, 183, 186, 197, and 200 each coordinate Zn(2+). CXXCXGXG motif repeat units lie at residues 140 to 147 (CDRCEGTG), 157 to 164 (CSTCNGSG), 183 to 190 (CPTCRGTG), and 197 to 204 (CDKCGGDG).

It belongs to the DnaJ family. As to quaternary structure, homodimer. Zn(2+) is required as a cofactor.

Its subcellular location is the cytoplasm. Functionally, participates actively in the response to hyperosmotic and heat shock by preventing the aggregation of stress-denatured proteins and by disaggregating proteins, also in an autonomous, DnaK-independent fashion. Unfolded proteins bind initially to DnaJ; upon interaction with the DnaJ-bound protein, DnaK hydrolyzes its bound ATP, resulting in the formation of a stable complex. GrpE releases ADP from DnaK; ATP binding to DnaK triggers the release of the substrate protein, thus completing the reaction cycle. Several rounds of ATP-dependent interactions between DnaJ, DnaK and GrpE are required for fully efficient folding. Also involved, together with DnaK and GrpE, in the DNA replication of plasmids through activation of initiation proteins. In Corynebacterium diphtheriae (strain ATCC 700971 / NCTC 13129 / Biotype gravis), this protein is Chaperone protein DnaJ 1.